A 244-amino-acid polypeptide reads, in one-letter code: Methylthioribulose-1-phosphate dehydratase (244 aa).

Residue Cys89 coordinates substrate. 2 residues coordinate Zn(2+): His107 and His109. Glu130 serves as the catalytic Proton donor/acceptor. His192 provides a ligand contact to Zn(2+).

The protein belongs to the aldolase class II family. MtnB subfamily. Requires Zn(2+) as cofactor.

The protein resides in the cytoplasm. It carries out the reaction 5-(methylsulfanyl)-D-ribulose 1-phosphate = 5-methylsulfanyl-2,3-dioxopentyl phosphate + H2O. It participates in amino-acid biosynthesis; L-methionine biosynthesis via salvage pathway; L-methionine from S-methyl-5-thio-alpha-D-ribose 1-phosphate: step 2/6. In terms of biological role, catalyzes the dehydration of methylthioribulose-1-phosphate (MTRu-1-P) into 2,3-diketo-5-methylthiopentyl-1-phosphate (DK-MTP-1-P). This chain is Methylthioribulose-1-phosphate dehydratase, found in Saccharomyces cerevisiae (strain YJM789) (Baker's yeast).